A 205-amino-acid chain; its full sequence is Protein GrpE (205 aa).

The interval 1–40 (MSRKLHEEELTPEGMDAAQNADPAGDPVSENEGALPAAEP) is disordered.

Belongs to the GrpE family. As to quaternary structure, homodimer.

It is found in the cytoplasm. In terms of biological role, participates actively in the response to hyperosmotic and heat shock by preventing the aggregation of stress-denatured proteins, in association with DnaK and GrpE. It is the nucleotide exchange factor for DnaK and may function as a thermosensor. Unfolded proteins bind initially to DnaJ; upon interaction with the DnaJ-bound protein, DnaK hydrolyzes its bound ATP, resulting in the formation of a stable complex. GrpE releases ADP from DnaK; ATP binding to DnaK triggers the release of the substrate protein, thus completing the reaction cycle. Several rounds of ATP-dependent interactions between DnaJ, DnaK and GrpE are required for fully efficient folding. This chain is Protein GrpE, found in Acidobacterium capsulatum (strain ATCC 51196 / DSM 11244 / BCRC 80197 / JCM 7670 / NBRC 15755 / NCIMB 13165 / 161).